A 602-amino-acid polypeptide reads, in one-letter code: Pyranose dehydrogenase 1 (602 aa).

The first 25 residues, 1-25, serve as a signal peptide directing secretion; that stretch reads MLPRVTKLNSRLLSLALLGIQIARG. A glycan (N-linked (GlcNAc...) asparagine) is linked at N100. At H128 the chain carries Tele-8alpha-FAD histidine. N200, N277, and N344 each carry an N-linked (GlcNAc...) asparagine glycan. H537 functions as the Proton acceptor in the catalytic mechanism. H581 is an active-site residue.

The protein belongs to the GMC oxidoreductase family. Monomer. It depends on FAD as a cofactor. Post-translationally, N-glycosylated.

Its subcellular location is the secreted. The enzyme catalyses pyranose + acceptor = pyranos-2-ulose + reduced acceptor.. The catalysed reaction is pyranose + acceptor = pyranos-3-ulose + reduced acceptor.. It catalyses the reaction pyranose + acceptor = pyranos-2,3-diulose + reduced acceptor.. It carries out the reaction a pyranoside + acceptor = a pyranosid-3-ulose + reduced acceptor.. The enzyme catalyses a pyranoside + acceptor = a pyranosid-3,4-diulose + reduced acceptor.. Functionally, catalyzes the single-oxidation or sequential double oxidation reaction of carbohydrates primarily at carbon-2 and/or carbon-3 with the concomitant reduction of the flavin. The enzyme exhibits a broad sugar substrate specificity, oxidizing different aldopyranoses to the corresponding C-1, C-2, C-3 or C-1,2, C-2,3 and C-3,4 (di)dehydro sugars with substrate-specific regioselectivity. Accepts only a narrow range of electron acceptors such as substituted benzoquinones and complexed metal ions and reacts extremely slowly with O(2) as acceptor. May play a role in the natural recycling of plant matter by oxidizing all major monosaccharides in lignocellulose and by reducing quinone compounds or reactive radical species generated during lignin depolymerization. The chain is Pyranose dehydrogenase 1 from Leucoagaricus meleagris (Western flat-topped agaric).